Consider the following 37-residue polypeptide: Large ribosomal subunit protein bL36 (37 aa).

It belongs to the bacterial ribosomal protein bL36 family.

The protein is Large ribosomal subunit protein bL36 of Francisella tularensis subsp. tularensis (strain FSC 198).